We begin with the raw amino-acid sequence, 274 residues long: NAD kinase (274 aa).

D50 functions as the Proton acceptor in the catalytic mechanism. NAD(+) contacts are provided by residues 50–51 (DG), 126–127 (NE), R152, D154, 165–170 (TAYNKS), and A189.

It belongs to the NAD kinase family. It depends on a divalent metal cation as a cofactor.

The protein resides in the cytoplasm. The enzyme catalyses NAD(+) + ATP = ADP + NADP(+) + H(+). Its function is as follows. Involved in the regulation of the intracellular balance of NAD and NADP, and is a key enzyme in the biosynthesis of NADP. Catalyzes specifically the phosphorylation on 2'-hydroxyl of the adenosine moiety of NAD to yield NADP. The polypeptide is NAD kinase (Streptococcus gordonii (strain Challis / ATCC 35105 / BCRC 15272 / CH1 / DL1 / V288)).